Reading from the N-terminus, the 388-residue chain is Chorismate synthase (388 aa).

Residues Arg-39 and Arg-45 each coordinate NADP(+). FMN contacts are provided by residues 130–132 (RSS), 251–252 (NA), Gly-296, 311–315 (KPIPT), and Arg-337.

The protein belongs to the chorismate synthase family. In terms of assembly, homotetramer. It depends on FMNH2 as a cofactor.

The enzyme catalyses 5-O-(1-carboxyvinyl)-3-phosphoshikimate = chorismate + phosphate. It functions in the pathway metabolic intermediate biosynthesis; chorismate biosynthesis; chorismate from D-erythrose 4-phosphate and phosphoenolpyruvate: step 7/7. Functionally, catalyzes the anti-1,4-elimination of the C-3 phosphate and the C-6 proR hydrogen from 5-enolpyruvylshikimate-3-phosphate (EPSP) to yield chorismate, which is the branch point compound that serves as the starting substrate for the three terminal pathways of aromatic amino acid biosynthesis. This reaction introduces a second double bond into the aromatic ring system. This Geobacillus sp. (strain WCH70) protein is Chorismate synthase.